A 1319-amino-acid polypeptide reads, in one-letter code: Chitin-binding domain protein cbd-1 (1319 aa).

A signal peptide spans 1-19; that stretch reads MGPQLATVSLLLLTFFSNS. 3 consecutive Chitin-binding type-2 domains span residues 28-83, 96-141, and 190-236; these read ATEC…ECRV, EFDC…TQDC, and DFDC…QSCD. Disulfide bonds link cysteine 61–cysteine 72, cysteine 128–cysteine 141, and cysteine 222–cysteine 235. The disordered stretch occupies residues 250-271; that stretch reads YSTSTITTPQEDDSEYSSTTSA. In terms of domain architecture, Chitin-binding type-2 4 spans 304–357; the sequence is PFVCQEGQVNSFGMCSSRFNRCQNNSVRSKQCPVNTLFESSLVMCVFDLPQCQP. An N-linked (GlcNAc...) asparagine glycan is attached at asparagine 327. A disulfide bridge connects residues cysteine 335 and cysteine 348. Residues 504-524 are disordered; sequence KNRHSKKQLGPHEDPDGYDDE. Over residues 513-524 the composition is skewed to basic and acidic residues; the sequence is GPHEDPDGYDDE. The Chitin-binding type-2 5 domain occupies 566-614; it reads NKDCQQYTTPTFLTFGDCFDQFIFCSGNGINRMAACPIGETFDKTLRSC. A disulfide bridge links cysteine 601 with cysteine 614. Positions 649 to 682 are disordered; sequence VTTQSTWNDQPSTTQAPNSYESYTTQYSSNDVPS. 3 Chitin-binding type-2 domains span residues 689-745, 782-838, and 883-942; these read GDRC…ECGS, GDRC…KCQT, and VDTC…ACDE. A disulfide bridge connects residues cysteine 721 and cysteine 734. The tract at residues 742–764 is disordered; it reads ECGSQGSTSSPVITTPGQDQSSN. The span at 745–764 shows a compositional bias: polar residues; sequence SQGSTSSPVITTPGQDQSSN. Cystine bridges form between cysteine 814-cysteine 827 and cysteine 916-cysteine 929. Over residues 984–995 the composition is skewed to polar residues; that stretch reads TGSTKYSTTDSG. A disordered region spans residues 984 to 1031; that stretch reads TGSTKYSTTDSGEYTIPYGDETTSTRSYDRADNDSEDEEEDDVEHDQK. Residue asparagine 1016 is glycosylated (N-linked (GlcNAc...) asparagine). The span at 1017–1027 shows a compositional bias: acidic residues; the sequence is DSEDEEEDDVE. Chitin-binding type-2 domains lie at 1029–1081, 1105–1163, 1179–1237, and 1242–1298; these read DQKC…GCGK, EGRC…ACTV, SAFC…GCEN, and NGEC…SCSG. Intrachain disulfides connect cysteine 1060/cysteine 1073, cysteine 1139/cysteine 1152, cysteine 1213/cysteine 1226, and cysteine 1274/cysteine 1287. Over residues 1297-1312 the composition is skewed to low complexity; the sequence is SGQASDSNSSYGSSTY. The interval 1297 to 1319 is disordered; that stretch reads SGQASDSNSSYGSSTYNDDKSGY. N-linked (GlcNAc...) asparagine glycosylation occurs at asparagine 1304.

The protein resides in the secreted. Its subcellular location is the extracellular space. It localises to the extracellular matrix. In terms of biological role, in unfertilized oocytes, maintains egg-1 and egg-2 at the plasma membrane together with chitin synthase chs-1 and kinase mbk-2. Essential for the formation of a continuous and cohesive chitin layer following fertilization. This is Chitin-binding domain protein cbd-1 from Caenorhabditis elegans.